The primary structure comprises 845 residues: Protein P (845 aa).

Positions 1–179 (MPLSYQHFRK…FCGSPYSWEQ (179 aa)) are terminal protein domain (TP). The interval 180–348 (ELQHGRLVIK…YCLSHLVNLR (169 aa)) is spacer. The tract at residues 226-246 (GLQPHQGPLASSQPGRSGSIR) is disordered. Residues 349 to 692 (EDRGPCDEHG…YMNLYPVARQ (344 aa)) form a polymerase/reverse transcriptase domain (RT) region. A Reverse transcriptase domain is found at 359 to 602 (EHHIRIPRTP…YSLNFMGYVI (244 aa)). Residues aspartate 431, aspartate 553, and aspartate 554 each contribute to the Mg(2+) site.

It belongs to the hepadnaviridae P protein family.

The enzyme catalyses DNA(n) + a 2'-deoxyribonucleoside 5'-triphosphate = DNA(n+1) + diphosphate. It carries out the reaction Endonucleolytic cleavage to 5'-phosphomonoester.. Activated by host HSP70 and HSP40 in vitro to be able to bind the epsilon loop of the pgRNA. Because deletion of the RNase H region renders the protein partly chaperone-independent, the chaperones may be needed indirectly to relieve occlusion of the RNA-binding site by this domain. Inhibited by several reverse-transcriptase inhibitors: Lamivudine, Adefovir and Entecavir. Its function is as follows. Multifunctional enzyme that converts the viral RNA genome into dsDNA in viral cytoplasmic capsids. This enzyme displays a DNA polymerase activity that can copy either DNA or RNA templates, and a ribonuclease H (RNase H) activity that cleaves the RNA strand of RNA-DNA heteroduplexes in a partially processive 3'- to 5'-endonucleasic mode. Neo-synthesized pregenomic RNA (pgRNA) are encapsidated together with the P protein, and reverse-transcribed inside the nucleocapsid. Initiation of reverse-transcription occurs first by binding the epsilon loop on the pgRNA genome, and is initiated by protein priming, thereby the 5'-end of (-)DNA is covalently linked to P protein. Partial (+)DNA is synthesized from the (-)DNA template and generates the relaxed circular DNA (RC-DNA) genome. After budding and infection, the RC-DNA migrates in the nucleus, and is converted into a plasmid-like covalently closed circular DNA (cccDNA). The activity of P protein does not seem to be necessary for cccDNA generation, and is presumably released from (+)DNA by host nuclear DNA repair machinery. The protein is Protein P of Hepatitis B virus genotype A2 subtype adw2 (isolate Germany/991/1990) (HBV-A).